A 119-amino-acid chain; its full sequence is Ribosome-binding factor A (119 aa).

This sequence belongs to the RbfA family. As to quaternary structure, monomer. Binds 30S ribosomal subunits, but not 50S ribosomal subunits or 70S ribosomes.

It localises to the cytoplasm. Its function is as follows. One of several proteins that assist in the late maturation steps of the functional core of the 30S ribosomal subunit. Associates with free 30S ribosomal subunits (but not with 30S subunits that are part of 70S ribosomes or polysomes). Required for efficient processing of 16S rRNA. May interact with the 5'-terminal helix region of 16S rRNA. This is Ribosome-binding factor A from Citrifermentans bemidjiense (strain ATCC BAA-1014 / DSM 16622 / JCM 12645 / Bem) (Geobacter bemidjiensis).